The primary structure comprises 552 residues: Membrane protein insertase YidC (552 aa).

A helical membrane pass occupies residues 3–23 (IKRTVLWVIFFMSAVMLFDNW). The interval 35–59 (PSATPTKTVGSAAPGTTTPGTQPAD) is disordered. Low complexity predominate over residues 42–59 (TVGSAAPGTTTPGTQPAD). 3 helical membrane-spanning segments follow: residues 364–384 (WGWSIVLLTLLIKAVFFPLSA), 430–450 (FGGCLPVVIQIPVFISLYWVL), and 504–524 (MMFMPIAFSVMFFFFPAGLVL).

This sequence belongs to the OXA1/ALB3/YidC family. Type 1 subfamily. As to quaternary structure, interacts with the Sec translocase complex via SecD. Specifically interacts with transmembrane segments of nascent integral membrane proteins during membrane integration.

It localises to the cell inner membrane. Required for the insertion and/or proper folding and/or complex formation of integral membrane proteins into the membrane. Involved in integration of membrane proteins that insert both dependently and independently of the Sec translocase complex, as well as at least some lipoproteins. Aids folding of multispanning membrane proteins. The sequence is that of Membrane protein insertase YidC from Paraburkholderia phytofirmans (strain DSM 17436 / LMG 22146 / PsJN) (Burkholderia phytofirmans).